A 108-amino-acid polypeptide reads, in one-letter code: ADM5 (108 aa).

The N-terminal stretch at 1–18 (MTAHILLLWLFASSILGD) is a signal peptide. A propeptide spanning residues 19–25 (PDSAGRL) is cleaved from the precursor. Cysteine 38 and cysteine 43 are disulfide-bonded. A disordered region spans residues 61–108 (KELSGKAGRKPQDPYSYGRRRRRRRRRREARLLRRLQDPSLRRAQLAG). Residue tyrosine 77 is modified to Tyrosine amide. Positions 78–89 (GRRRRRRRRRRE) are enriched in basic residues. Positions 89-108 (EARLLRRLQDPSLRRAQLAG) are excised as a propeptide. Basic and acidic residues predominate over residues 90 to 101 (ARLLRRLQDPSL).

The protein belongs to the adrenomedullin family. In terms of tissue distribution, expressed abundantly in the spleen and thymus. Also expressed in adrenal and pituitary. Not expressed in brain, heart, kidney, liver and stomach.

Its subcellular location is the secreted. Functionally, seems to have a peripheral vasodepressor effect and a central vasopressor effect. The protein is ADM5 (ADM5) of Sus scrofa (Pig).